The following is a 1023-amino-acid chain: RTX-I toxin determinant A from serotypes 5/10 (1023 aa).

Helical transmembrane passes span 226 to 256 (NNLP…ILSN), 297 to 326 (STTA…ADKF), and 367 to 406 (INSV…SGIL). 6 Hemolysin-type calcium-binding repeats span residues 730–747 (FGSR…DDEI), 748–765 (YGND…NDVI), 766–783 (HGGD…NDRL), 784–801 (IGGK…DDEL), 812–829 (LGGA…TNLF), and 830–847 (DGGV…KDIY).

This sequence belongs to the RTX prokaryotic toxin (TC 1.C.11) family. Post-translationally, palmitoylated by ApxIC. The toxin only becomes active when modified.

It is found in the secreted. It localises to the host cell membrane. One of the virulence factors of A.pleuropneumoniae, which has a strong hemolytic activity and is cytotoxic for alveolar macrophages and neutrophils. The chain is RTX-I toxin determinant A from serotypes 5/10 (apxIA) from Actinobacillus pleuropneumoniae (Haemophilus pleuropneumoniae).